A 201-amino-acid polypeptide reads, in one-letter code: Ras-related protein Rab-1B (201 aa).

Methionine 1 bears the N-acetylmethionine mark. Residues serine 17, glycine 18, valine 19, glycine 20, lysine 21, serine 22, cysteine 23, tyrosine 33, threonine 34, glutamate 35, serine 36, serine 39, and threonine 40 each coordinate GTP. Serine 22 lines the Mg(2+) pocket. Positions 30–45 match the Switch 1 motif; sequence DDTYTESYISTIGVDF. Threonine 40 and aspartate 63 together coordinate Mg(2+). The tract at residues 64-83 is switch 2 region; Required for interaction with REP1/CHM; it reads TAGQERFRTITSSYYRGAHG. Residues 65–80 carry the Switch 2 motif; the sequence is AGQERFRTITSSYYRG. The GTP site is built by glycine 66, asparagine 121, lysine 122, aspartate 124, serine 151, alanine 152, and lysine 153. The segment at 173 to 201 is disordered; the sequence is MGPGAASGGERPNLKIDSTPVKQAGGGCC. Residues cysteine 200 and cysteine 201 are each lipidated (S-geranylgeranyl cysteine). Cysteine 201 carries the post-translational modification Cysteine methyl ester.

Belongs to the small GTPase superfamily. Rab family. Interacts with MICAL1 and MICAL2. Interacts (in GTP-bound form) with MICALCL, MICAL1 and MILCAL3. Interacts with GDI1; the interaction requires the GDP-bound state. Interacts with CHM/REP1; the interaction requires the GDP-bound form and is necessary for prenylation by GGTase II. Interacts with RabGAP TBC1D20. Interacts (in GDP-bound form) with lipid phosphatase MTMR6 (via GRAM domain); the interaction regulates MTMR6 recruitment to the endoplasmic reticulum-Golgi intermediate compartment. Interacts (in GDP-bound form) with lipid phosphatase MTMR7. It depends on Mg(2+) as a cofactor. Prenylated; by GGTase II, only after interaction of the substrate with Rab escort protein 1 (REP1).

Its subcellular location is the cytoplasm. The protein resides in the membrane. It localises to the preautophagosomal structure membrane. It is found in the perinuclear region. It carries out the reaction GTP + H2O = GDP + phosphate + H(+). Regulated by guanine nucleotide exchange factors (GEFs) which promote the exchange of bound GDP for free GTP. Regulated by GTPase activating proteins (GAPs) including TBC1D20 which increases the GTP hydrolysis activity. Inhibited by GDP dissociation inhibitors (GDIs). The small GTPases Rab are key regulators of intracellular membrane trafficking, from the formation of transport vesicles to their fusion with membranes. Rabs cycle between an inactive GDP-bound form and an active GTP-bound form that is able to recruit to membranes different set of downstream effectors directly responsible for vesicle formation, movement, tethering and fusion. Plays a role in the initial events of the autophagic vacuole development which take place at specialized regions of the endoplasmic reticulum. Regulates vesicular transport between the endoplasmic reticulum and successive Golgi compartments. Required to modulate the compacted morphology of the Golgi. Promotes the recruitment of lipid phosphatase MTMR6 to the endoplasmic reticulum-Golgi intermediate compartment. The sequence is that of Ras-related protein Rab-1B (RAB1B) from Bos taurus (Bovine).